Here is a 268-residue protein sequence, read N- to C-terminus: Hydroxyethylthiazole kinase (268 aa).

Met-45 is a binding site for substrate. The ATP site is built by Arg-121 and Thr-167. Residue Gly-194 coordinates substrate.

This sequence belongs to the Thz kinase family. Requires Mg(2+) as cofactor.

It catalyses the reaction 5-(2-hydroxyethyl)-4-methylthiazole + ATP = 4-methyl-5-(2-phosphooxyethyl)-thiazole + ADP + H(+). Its pathway is cofactor biosynthesis; thiamine diphosphate biosynthesis; 4-methyl-5-(2-phosphoethyl)-thiazole from 5-(2-hydroxyethyl)-4-methylthiazole: step 1/1. In terms of biological role, catalyzes the phosphorylation of the hydroxyl group of 4-methyl-5-beta-hydroxyethylthiazole (THZ). This is Hydroxyethylthiazole kinase from Bacillus thuringiensis subsp. konkukian (strain 97-27).